The following is a 343-amino-acid chain: Heme A synthase (343 aa).

8 helical membrane passes run V13–A33, H96–I116, A130–L150, L161–D181, G197–A217, F258–A278, A294–V314, and L318–W338. Position 260 (H260) interacts with heme. H322 contacts heme.

This sequence belongs to the COX15/CtaA family. Type 2 subfamily. Interacts with CtaB. It depends on heme b as a cofactor.

It is found in the cell membrane. It carries out the reaction Fe(II)-heme o + 2 A + H2O = Fe(II)-heme a + 2 AH2. It functions in the pathway porphyrin-containing compound metabolism; heme A biosynthesis; heme A from heme O: step 1/1. Functionally, catalyzes the conversion of heme O to heme A by two successive hydroxylations of the methyl group at C8. The first hydroxylation forms heme I, the second hydroxylation results in an unstable dihydroxymethyl group, which spontaneously dehydrates, resulting in the formyl group of heme A. The sequence is that of Heme A synthase from Caulobacter vibrioides (strain ATCC 19089 / CIP 103742 / CB 15) (Caulobacter crescentus).